Here is a 213-residue protein sequence, read N- to C-terminus: Large ribosomal subunit protein uL3 (213 aa).

Glutamine 151 carries the post-translational modification N5-methylglutamine.

Belongs to the universal ribosomal protein uL3 family. In terms of assembly, part of the 50S ribosomal subunit. Forms a cluster with proteins L14 and L19. Post-translationally, methylated by PrmB.

Functionally, one of the primary rRNA binding proteins, it binds directly near the 3'-end of the 23S rRNA, where it nucleates assembly of the 50S subunit. This Allorhizobium ampelinum (strain ATCC BAA-846 / DSM 112012 / S4) (Agrobacterium vitis (strain S4)) protein is Large ribosomal subunit protein uL3.